The following is a 412-amino-acid chain: Short-chain specific acyl-CoA dehydrogenase, mitochondrial (412 aa).

The N-terminal 24 residues, 1-24, are a transit peptide targeting the mitochondrion; that stretch reads MAAALLARAGGSLGRALRARDWRR. Thr-27 bears the Phosphothreonine mark. Residue Lys-51 is modified to N6-acetyllysine; alternate. Position 51 is an N6-succinyllysine; alternate (Lys-51). Lys-72 carries the post-translational modification N6-acetyllysine. Position 129 is an N6-acetyllysine; alternate (Lys-129). The residue at position 129 (Lys-129) is an N6-succinyllysine; alternate. FAD is bound by residues 152 to 161 and 185 to 187; these read FALSEPGNGS and WIT. Ser-161 lines the substrate pocket. Lys-208 carries the N6-acetyllysine modification. Lys-262 is modified (N6-acetyllysine; alternate). Lys-262 bears the N6-succinyllysine; alternate mark. Substrate is bound at residue 269–272; sequence DMGR. At Lys-292 the chain carries N6-acetyllysine. Arg-297 contributes to the FAD binding site. Lys-306 bears the N6-acetyllysine; alternate mark. Lys-306 bears the N6-succinyllysine; alternate mark. Residue 365 to 369 coordinates FAD; the sequence is QILGG. Residue Glu-392 is the Proton acceptor of the active site. 394–396 lines the FAD pocket; that stretch reads TSE.

It belongs to the acyl-CoA dehydrogenase family. Homotetramer. It depends on FAD as a cofactor.

It localises to the mitochondrion matrix. It carries out the reaction a short-chain 2,3-saturated fatty acyl-CoA + oxidized [electron-transfer flavoprotein] + H(+) = a short-chain (2E)-enoyl-CoA + reduced [electron-transfer flavoprotein]. The enzyme catalyses butanoyl-CoA + oxidized [electron-transfer flavoprotein] + H(+) = (2E)-butenoyl-CoA + reduced [electron-transfer flavoprotein]. The catalysed reaction is pentanoyl-CoA + oxidized [electron-transfer flavoprotein] + H(+) = (2E)-pentenoyl-CoA + reduced [electron-transfer flavoprotein]. It catalyses the reaction hexanoyl-CoA + oxidized [electron-transfer flavoprotein] + H(+) = (2E)-hexenoyl-CoA + reduced [electron-transfer flavoprotein]. It functions in the pathway lipid metabolism; mitochondrial fatty acid beta-oxidation. Its function is as follows. Short-chain specific acyl-CoA dehydrogenase is one of the acyl-CoA dehydrogenases that catalyze the first step of mitochondrial fatty acid beta-oxidation, an aerobic process breaking down fatty acids into acetyl-CoA and allowing the production of energy from fats. The first step of fatty acid beta-oxidation consists in the removal of one hydrogen from C-2 and C-3 of the straight-chain fatty acyl-CoA thioester, resulting in the formation of trans-2-enoyl-CoA. Among the different mitochondrial acyl-CoA dehydrogenases, short-chain specific acyl-CoA dehydrogenase acts specifically on acyl-CoAs with saturated 4 to 6 carbons long primary chains. The chain is Short-chain specific acyl-CoA dehydrogenase, mitochondrial (Acads) from Rattus norvegicus (Rat).